The sequence spans 435 residues: GTPase Der (435 aa).

EngA-type G domains lie at Ala2 to Gly167 and Pro178 to Cys351. Residues Gly8–Ser15, Asp55–Val59, Asn118–Glu121, Gly184–Ser191, Asp231–Met235, and Asn297–Asp300 contribute to the GTP site. In terms of domain architecture, KH-like spans Arg352–Arg435.

This sequence belongs to the TRAFAC class TrmE-Era-EngA-EngB-Septin-like GTPase superfamily. EngA (Der) GTPase family. In terms of assembly, associates with the 50S ribosomal subunit.

Its function is as follows. GTPase that plays an essential role in the late steps of ribosome biogenesis. This is GTPase Der from Pseudothermotoga lettingae (strain ATCC BAA-301 / DSM 14385 / NBRC 107922 / TMO) (Thermotoga lettingae).